The chain runs to 229 residues: Meiotically up-regulated gene 31 protein (229 aa).

2 disordered regions span residues 16–68 and 189–229; these read EDSA…EEDK and GLPE…TTWA.

It is found in the endoplasmic reticulum. Its function is as follows. Has a role in meiosis. This chain is Meiotically up-regulated gene 31 protein (mug31), found in Schizosaccharomyces pombe (strain 972 / ATCC 24843) (Fission yeast).